The primary structure comprises 353 residues: Tsukushi (353 aa).

Residues 1–17 (MLCTLFLLLLALGIVQT) form the signal peptide. The LRRNT domain maps to 18–59 (TRPCFPGCQCEEETFGLFDSFSLIRVDCSSLGPHIVPVPIPL). LRR repeat units lie at residues 60–80 (DTAHLDLSSNRLETVNESVLG), 86–107 (TLAGLDLSHNLLTSITPTAFSR), 110–131 (YLESLDLSHNGLAALPAEVFTS), 133–154 (PLSDINLSHNRLREVSISAFTT), 160–180 (ALHVDLSHNLIHRLLPYPARA), 186–207 (TIQSLNLSWNRLRAVPDLRDLP), 208–228 (LRYLSLDGNPLATINPGAFMG), 231–253 (GLTHLSLASLQGILQLPPHGFRE), 256–277 (GLQVLDLSGNPKLKWAGAEVFS), and 281–302 (LLQELDLSGSSLVPLPETLLHH). Asn75 carries an N-linked (GlcNAc...) asparagine glycan. Residue Asn138 is glycosylated (N-linked (GlcNAc...) asparagine). A glycan (N-linked (GlcNAc...) asparagine) is linked at Asn191.

In terms of assembly, interacts with FZD4 (via FZ domain); competes with WNT2B for binding to FZD4, inhibiting Wnt signaling and repressing peripheral eye development. Interacts with TGFB1; the interaction contributes to regulation of the hair cycle. Interacts with netrin. Interacts with CCN2. Expressed at high levels in the liver, small intestine and placenta. Not or barely detectable in other tissues, including whole pancreas, adipose tissues, skeletal muscle, kidney, spleen, brain, lung and testis.

The protein localises to the secreted. Its function is as follows. Contributes to various developmental events and other processes such as wound healing and cholesterol homeostasis through its interactions with multiple signaling pathways. Wnt signaling inhibitor which competes with WNT2B for binding to Wnt receptor FZD4 and represses WNT2B-dependent development of the peripheral eye. Plays a role in regulating the hair cycle by controlling TGFB1 signaling. Required for the development of the anterior commissure in the brain by inhibiting neurite outgrowth. Essential for terminal differentiation of hippocampal neural stem cells. Plays a role in regulating bone elongation and bone mass by modulating growth plate chondrocyte function and overall body size. Required for development of the inner ear through its involvement in stereocilia formation in inner hair cells. Facilitates wound healing by inhibiting secretion of TGFB1 from macrophages which prevents myofibroblast differentiation, maintaining inflammatory cell quiescence. Plays a role in cholesterol homeostasis by reducing circulating high-density lipoprotein cholesterol, lowering cholesterol efflux capacity and decreasing cholesterol-to-bile acid conversion in the liver. In one study, shown to negatively regulate sympathetic innervation in brown fat, leading to reduced energy expenditure. In another study, shown not to affect brown fat thermogenic capacity, body weight gain or glucose homeostasis. This chain is Tsukushi (Tsku), found in Rattus norvegicus (Rat).